A 687-amino-acid chain; its full sequence is Dentin sialophosphoprotein (687 aa).

The N-terminal stretch at 1-17 (MKTKIIIYICIWATAWA) is a signal peptide. Residues 54 to 113 (NNATNDDSPKGSELGRQVHSNGGYERDRNGSESIAVGGKSSPTQPILANAQGNSAKERED) form a disordered region. N-linked (GlcNAc...) asparagine glycosylation occurs at Asn-55. Position 57 is a phosphothreonine; by CK2 (Thr-57). Asn-82 carries N-linked (GlcNAc...) asparagine glycosylation. Positions 93-107 (SSPTQPILANAQGNS) are enriched in polar residues. N-linked (GlcNAc...) asparagine glycosylation occurs at Asn-128. A compositionally biased stretch (basic and acidic residues) spans 146–160 (EAKESKVHGQPHQDT). A disordered region spans residues 146-687 (EAKESKVHGQ…SDSNHSTSDD (542 aa)). Residues 161–194 (KTGLASDTSQNGDATLVQENEPQVAGSKNSTNHE) show a composition bias toward polar residues. Asn-189 carries an N-linked (GlcNAc...) asparagine glycan. Position 226 is a phosphoserine; by CK2 (Ser-226). Ser-253 bears the Phosphoserine; by CK1 mark. Positions 262 to 275 (GDGRESHDGTEGHE) are enriched in basic and acidic residues. Residues 276–292 (GQSSGGNNDNRGQGSVS) show a composition bias toward polar residues. Residue Ser-278 is modified to Phosphoserine; by CK1. Ser-292 bears the Phosphoserine; by CK2 mark. Residue Ser-298 is modified to Phosphoserine; by CK1. N-linked (GlcNAc...) asparagine glycosylation occurs at Asn-312. Ser-315 bears the Phosphoserine; by CK2 mark. Thr-319 and Thr-329 each carry phosphothreonine; by CK2. 2 positions are modified to phosphoserine; by CK2: Ser-337 and Ser-345. Residues 352 to 375 (SGQSQNQGLETEGSSTGNKSSITK) are compositionally biased toward polar residues. At Ser-366 the chain carries Phosphoserine; by CK1. N-linked (GlcNAc...) asparagine glycosylation occurs at Asn-369. Residues 386-417 (SNGHHGMELDKRNSPKQGESDKPQGAAEKSDT) show a composition bias toward basic and acidic residues. A compositionally biased stretch (polar residues) spans 418-432 (HNNMGHSRIGSSSNS). Positions 447-460 (GDDPNSSDESNGSD) are enriched in low complexity. The segment covering 500–521 (DDSSDDTSDTDDSDSNGDDDSE) has biased composition (acidic residues). Residues 522–545 (SKDKDESDNSNHDNDSDSESKSDS) show a composition bias toward basic and acidic residues. Over residues 555–598 (SSDSSDSSDSSETSDSSDSSDTSDSSDSSDSSDSSNSSDTSDSS) the composition is skewed to low complexity. The segment covering 599–617 (DSSDGDSSDGDSSDSDSSD) has biased composition (acidic residues). The span at 618–639 (SDSSNSSDSDSSDSSDSSSSDS) shows a compositional bias: low complexity. The segment covering 667 to 677 (SDSDSDSDSEG) has biased composition (acidic residues). Residues 678-687 (SDSNHSTSDD) are compositionally biased toward low complexity.

As to quaternary structure, interacts with FBLN7. Post-translationally, DSP is glycosylated. Specifically expressed in teeth, mainly in odontoblasts and transiently in pre-ameloblasts.

It is found in the secreted. It localises to the extracellular space. Its subcellular location is the extracellular matrix. In terms of biological role, DSP may be an important factor in dentinogenesis. DPP may bind high amount of calcium and facilitate initial mineralization of dentin matrix collagen as well as regulate the size and shape of the crystals. The sequence is that of Dentin sialophosphoprotein (Dspp) from Rattus norvegicus (Rat).